Here is a 148-residue protein sequence, read N- to C-terminus: Hemoglobin subunit beta-A (148 aa).

Residues 3–148 form the Globin domain; it reads DWTDAERAAI…VVSALGRQYH (146 aa). The heme b site is built by H64 and H93.

It belongs to the globin family. Heterotetramer of two alpha chains and two beta chains. Red blood cells.

In terms of biological role, involved in oxygen transport from gills to the various peripheral tissues. In Seriola quinqueradiata (Five-ray yellowtail), this protein is Hemoglobin subunit beta-A (hbb1).